The sequence spans 318 residues: MFLMNILCLVIPILLAMAFLTLVERKILGYMQLRKGPNIVGPYGLLQPIADAIKLFIKEPLRPLTSSKLMFTLAPTLAFTLALSLWIPMPMPHPLINLNLGVLFILALSSLAVYSILWSGWASNSKYALIGALRAVAQTISYEVTLAIILLSIMMMNGSFTLSTLTTTQEHMWLIFPLWPLAMMWFISTLAETNRAPFDLTEGESELVSGFNVEYAAGPFALFFMAEYTNIIMMNALTTTLFLGAFHNPLFPELFTVNFITKTLILTMMFLWVRASYPRFRYDQLMHLLWKSFLPLTLALCMFHVSMPALSAGVPPHM.

9 helical membrane-spanning segments follow: residues 2 to 22 (FLMN…FLTL), 37 to 57 (PNIV…KLFI), 69 to 89 (LMFT…WIPM), 100 to 120 (LGVL…LWSG), 136 to 156 (VAQT…IMMM), 171 to 191 (HMWL…STLA), 231 to 251 (IIMM…NPLF), 253 to 273 (ELFT…FLWV), and 293 to 313 (FLPL…LSAG).

This sequence belongs to the complex I subunit 1 family. In terms of assembly, core subunit of respiratory chain NADH dehydrogenase (Complex I) which is composed of 45 different subunits.

Its subcellular location is the mitochondrion inner membrane. The enzyme catalyses a ubiquinone + NADH + 5 H(+)(in) = a ubiquinol + NAD(+) + 4 H(+)(out). Functionally, core subunit of the mitochondrial membrane respiratory chain NADH dehydrogenase (Complex I) which catalyzes electron transfer from NADH through the respiratory chain, using ubiquinone as an electron acceptor. Essential for the catalytic activity and assembly of complex I. The chain is NADH-ubiquinone oxidoreductase chain 1 (MT-ND1) from Euphractus sexcinctus (Six-banded armadillo).